Here is a 484-residue protein sequence, read N- to C-terminus: Probable efflux pump outer membrane protein TtgC (484 aa).

The N-terminal stretch at 1 to 17 (MTKSLLSLAVTAFILGG) is a signal peptide. A lipid anchor (N-palmitoyl cysteine) is attached at Cys-18. A lipid anchor (S-diacylglycerol cysteine) is attached at Cys-18.

This sequence belongs to the outer membrane factor (OMF) (TC 1.B.17) family.

Its subcellular location is the cell outer membrane. Its function is as follows. Probable outer membrane component of the TtgABC efflux pump with unknown specificity. The protein is Probable efflux pump outer membrane protein TtgC (ttgC) of Pseudomonas putida (strain ATCC 47054 / DSM 6125 / CFBP 8728 / NCIMB 11950 / KT2440).